The primary structure comprises 479 residues: Protein TRIGALACTOSYLDIACYLGLYCEROL 4, chloroplastic (479 aa).

The hydrophobic stretch at 288–310 (VFLSSPHVAVSGIIGSVMTAAFG) threads the membrane.

As to quaternary structure, homodimer. Forms dimeric beta-barrel. Interacts with TGD5.

The protein localises to the plastid. It localises to the chloroplast outer membrane. It is found in the endoplasmic reticulum. Involved in lipid transfer from the endoplasmic reticulum (ER) to plastids. Specifically binds phosphatidic acid (PtdOH). The sequence is that of Protein TRIGALACTOSYLDIACYLGLYCEROL 4, chloroplastic from Arabidopsis thaliana (Mouse-ear cress).